We begin with the raw amino-acid sequence, 503 residues long: Maturase K (503 aa).

The protein belongs to the intron maturase 2 family. MatK subfamily.

The protein resides in the plastid. Its subcellular location is the chloroplast. Usually encoded in the trnK tRNA gene intron. Probably assists in splicing its own and other chloroplast group II introns. The chain is Maturase K from Agonis flexuosa (Australian willow myrtle).